We begin with the raw amino-acid sequence, 357 residues long: Eugenol O-methyltransferase (357 aa).

Residues Gly-203, Asp-226, Asp-246, Met-247, and Lys-260 each contribute to the S-adenosyl-L-methionine site. Catalysis depends on His-264, which acts as the Proton acceptor.

Belongs to the class I-like SAM-binding methyltransferase superfamily. Cation-independent O-methyltransferase family. COMT subfamily. As to expression, specifically expressed in the peltate glandular trichomes on the surface of the young basil leaves.

It catalyses the reaction (E)-isoeugenol + S-adenosyl-L-methionine = (E)-isomethyleugenol + S-adenosyl-L-homocysteine + H(+). The protein operates within aromatic compound metabolism; phenylpropanoid biosynthesis. Its function is as follows. Phenylpropene O-methyltransferase that catalyzes the methylation of the para-4-hydroxyl of eugenol to methyleugenol. Can also convert chavicol to methylchavicol but with less affinity. This Ocimum basilicum (Sweet basil) protein is Eugenol O-methyltransferase (EOMT1).